A 347-amino-acid chain; its full sequence is DNA-directed RNA polymerase subunit alpha (347 aa).

The interval 1 to 243 is alpha N-terminal domain (alpha-NTD); sequence MLIKQGDRLI…DQISVFINFD (243 aa). The tract at residues 260–347 is alpha C-terminal domain (alpha-CTD); the sequence is VNENLFKGID…EWKRKQQNEA (88 aa).

It belongs to the RNA polymerase alpha chain family. As to quaternary structure, homodimer. The RNAP catalytic core consists of 2 alpha, 1 beta, 1 beta' and 1 omega subunit. When a sigma factor is associated with the core the holoenzyme is formed, which can initiate transcription.

It catalyses the reaction RNA(n) + a ribonucleoside 5'-triphosphate = RNA(n+1) + diphosphate. DNA-dependent RNA polymerase catalyzes the transcription of DNA into RNA using the four ribonucleoside triphosphates as substrates. In Nitratidesulfovibrio vulgaris (strain DSM 19637 / Miyazaki F) (Desulfovibrio vulgaris), this protein is DNA-directed RNA polymerase subunit alpha.